Consider the following 242-residue polypeptide: Ribonuclease 3 2 (242 aa).

Residues 12-137 (LESLVRKLGL…VLGALYLSTS (126 aa)) form the RNase III domain. Position 51 (glutamate 51) interacts with Mg(2+). Residue aspartate 55 is part of the active site. Positions 123 and 126 each coordinate Mg(2+). Glutamate 126 is a catalytic residue. The DRBM domain occupies 165-235 (NYKAALQEWT…AKVAFLAITP (71 aa)).

It belongs to the ribonuclease III family. In terms of assembly, homodimer. The cofactor is Mg(2+).

The protein resides in the cytoplasm. The catalysed reaction is Endonucleolytic cleavage to 5'-phosphomonoester.. Functionally, digests double-stranded RNA. Involved in the processing of primary rRNA transcript to yield the immediate precursors to the large and small rRNAs (23S and 16S). Processes some mRNAs, and tRNAs when they are encoded in the rRNA operon. Processes pre-crRNA and tracrRNA of type II CRISPR loci if present in the organism. The sequence is that of Ribonuclease 3 2 (rnc2) from Nostoc sp. (strain PCC 7120 / SAG 25.82 / UTEX 2576).